We begin with the raw amino-acid sequence, 437 residues long: Serine hydroxymethyltransferase (437 aa).

(6S)-5,6,7,8-tetrahydrofolate-binding positions include Leu-130 and 134–136 (GHL). Lys-239 bears the N6-(pyridoxal phosphate)lysine mark.

It belongs to the SHMT family. As to quaternary structure, homodimer. It depends on pyridoxal 5'-phosphate as a cofactor.

It is found in the cytoplasm. The catalysed reaction is (6R)-5,10-methylene-5,6,7,8-tetrahydrofolate + glycine + H2O = (6S)-5,6,7,8-tetrahydrofolate + L-serine. It functions in the pathway one-carbon metabolism; tetrahydrofolate interconversion. Its pathway is amino-acid biosynthesis; glycine biosynthesis; glycine from L-serine: step 1/1. Catalyzes the reversible interconversion of serine and glycine with tetrahydrofolate (THF) serving as the one-carbon carrier. This reaction serves as the major source of one-carbon groups required for the biosynthesis of purines, thymidylate, methionine, and other important biomolecules. Also exhibits THF-independent aldolase activity toward beta-hydroxyamino acids, producing glycine and aldehydes, via a retro-aldol mechanism. The protein is Serine hydroxymethyltransferase of Bartonella quintana (strain Toulouse) (Rochalimaea quintana).